A 360-amino-acid chain; its full sequence is Photosystem II protein D1 2 (360 aa).

Transmembrane regions (helical) follow at residues 29–46 (YIGW…AATT), 118–133 (HFLT…EWEL), and 142–156 (WICL…AATA). H118 is a chlorophyll a binding site. Y126 contributes to the pheophytin a binding site. Residues D170 and E189 each coordinate [CaMn4O5] cluster. Residues 197–218 (FHMLGVAGVFGGSLFSAMHGSL) traverse the membrane as a helical segment. A chlorophyll a-binding site is contributed by H198. A quinone-binding positions include H215 and 264-265 (SF). Fe cation is bound at residue H215. H272 contacts Fe cation. Residues 274–288 (FLAAWPVIGIWFTAL) traverse the membrane as a helical segment. [CaMn4O5] cluster is bound by residues H332, E333, D342, and A344. A propeptide spanning residues 345-360 (AGEVAPVAISAPAING) is cleaved from the precursor.

This sequence belongs to the reaction center PufL/M/PsbA/D family. In terms of assembly, PSII is composed of 1 copy each of membrane proteins PsbA, PsbB, PsbC, PsbD, PsbE, PsbF, PsbH, PsbI, PsbJ, PsbK, PsbL, PsbM, PsbT, PsbX, PsbY, PsbZ, Psb30/Ycf12, peripheral proteins PsbO, CyanoQ (PsbQ), PsbU, PsbV and a large number of cofactors. It forms dimeric complexes. It depends on The D1/D2 heterodimer binds P680, chlorophylls that are the primary electron donor of PSII, and subsequent electron acceptors. It shares a non-heme iron and each subunit binds pheophytin, quinone, additional chlorophylls, carotenoids and lipids. D1 provides most of the ligands for the Mn4-Ca-O5 cluster of the oxygen-evolving complex (OEC). There is also a Cl(-1) ion associated with D1 and D2, which is required for oxygen evolution. The PSII complex binds additional chlorophylls, carotenoids and specific lipids. as a cofactor. Tyr-161 forms a radical intermediate that is referred to as redox-active TyrZ, YZ or Y-Z. Post-translationally, C-terminally processed by CtpA; processing is essential to allow assembly of the oxygen-evolving complex and thus photosynthetic growth.

It localises to the cellular thylakoid membrane. It catalyses the reaction 2 a plastoquinone + 4 hnu + 2 H2O = 2 a plastoquinol + O2. In terms of biological role, photosystem II (PSII) is a light-driven water:plastoquinone oxidoreductase that uses light energy to abstract electrons from H(2)O, generating O(2) and a proton gradient subsequently used for ATP formation. It consists of a core antenna complex that captures photons, and an electron transfer chain that converts photonic excitation into a charge separation. The D1/D2 (PsbA/PsbD) reaction center heterodimer binds P680, the primary electron donor of PSII as well as several subsequent electron acceptors. This chain is Photosystem II protein D1 2, found in Nostoc sp. (strain PCC 7120 / SAG 25.82 / UTEX 2576).